Reading from the N-terminus, the 340-residue chain is UDP-3-O-(3-hydroxymyristoyl)glucosamine N-acyltransferase (340 aa).

Residue His239 is the Proton acceptor of the active site.

This sequence belongs to the transferase hexapeptide repeat family. LpxD subfamily. In terms of assembly, homotrimer.

It carries out the reaction a UDP-3-O-[(3R)-3-hydroxyacyl]-alpha-D-glucosamine + a (3R)-hydroxyacyl-[ACP] = a UDP-2-N,3-O-bis[(3R)-3-hydroxyacyl]-alpha-D-glucosamine + holo-[ACP] + H(+). The enzyme catalyses UDP-3-O-[(3R)-3-hydroxytetradecanoyl]-alpha-D-glucosamine + (3R)-hydroxytetradecanoyl-[ACP] = UDP-2-N,3-O-bis[(3R)-3-hydroxytetradecanoyl]-alpha-D-glucosamine + holo-[ACP] + H(+). It participates in glycolipid biosynthesis; lipid IV(A) biosynthesis; lipid IV(A) from (3R)-3-hydroxytetradecanoyl-[acyl-carrier-protein] and UDP-N-acetyl-alpha-D-glucosamine: step 3/6. In terms of biological role, catalyzes the N-acylation of UDP-3-O-(hydroxytetradecanoyl)glucosamine using 3-hydroxytetradecanoyl-ACP as the acyl donor. Is involved in the biosynthesis of lipid A, a phosphorylated glycolipid that anchors the lipopolysaccharide to the outer membrane of the cell. The chain is UDP-3-O-(3-hydroxymyristoyl)glucosamine N-acyltransferase from Yersinia enterocolitica.